The primary structure comprises 888 residues: Pyruvate dehydrogenase E1 component (888 aa).

In terms of assembly, homodimer. Part of the PDH complex, consisting of multiple copies of pyruvate dehydrogenase (E1), dihydrolipoamide acetyltransferase (E2) and lipoamide dehydrogenase (E3). Thiamine diphosphate serves as cofactor.

It carries out the reaction N(6)-[(R)-lipoyl]-L-lysyl-[protein] + pyruvate + H(+) = N(6)-[(R)-S(8)-acetyldihydrolipoyl]-L-lysyl-[protein] + CO2. Functionally, component of the pyruvate dehydrogenase (PDH) complex, that catalyzes the overall conversion of pyruvate to acetyl-CoA and CO(2). This chain is Pyruvate dehydrogenase E1 component (aceE), found in Buchnera aphidicola subsp. Schizaphis graminum (strain Sg).